The following is an 822-amino-acid chain: Putative ESX-1 scaffolding and assembly protein SaeB (822 aa).

Its function is as follows. May be involved in assembly of the ESX-1 / type VII specialized secretion system (T7SS), which exports several proteins including EsxA and EsxB. Involved in DNA conjugation in recipient (MKD8) but not donor (mc(2)155) strain. This Mycolicibacterium smegmatis (strain MKD8) (Mycobacterium smegmatis) protein is Putative ESX-1 scaffolding and assembly protein SaeB (saeB).